Reading from the N-terminus, the 167-residue chain is Lipoprotein signal peptidase (167 aa).

The next 3 helical transmembrane spans lie at 9 to 29, 68 to 88, and 98 to 118; these read AWLY…TKNL, LPLL…YALY, and MGLI…LGMV. Catalysis depends on residues Asp120 and Asp138. A helical membrane pass occupies residues 130–150; it reads YWPAFNIADASISIGIALLIL.

The protein belongs to the peptidase A8 family.

The protein resides in the cell inner membrane. It catalyses the reaction Release of signal peptides from bacterial membrane prolipoproteins. Hydrolyzes -Xaa-Yaa-Zaa-|-(S,diacylglyceryl)Cys-, in which Xaa is hydrophobic (preferably Leu), and Yaa (Ala or Ser) and Zaa (Gly or Ala) have small, neutral side chains.. It participates in protein modification; lipoprotein biosynthesis (signal peptide cleavage). Functionally, this protein specifically catalyzes the removal of signal peptides from prolipoproteins. The protein is Lipoprotein signal peptidase of Aquifex aeolicus (strain VF5).